Here is a 605-residue protein sequence, read N- to C-terminus: DNA primase (605 aa).

Residues Cys-38 to Cys-62 form a CHC2-type zinc finger. The region spanning Asp-260 to Gly-341 is the Toprim domain. The Mg(2+) site is built by Glu-266, Asp-310, and Asp-312.

This sequence belongs to the DnaG primase family. Monomer. Interacts with DnaB. Zn(2+) serves as cofactor. It depends on Mg(2+) as a cofactor.

The catalysed reaction is ssDNA + n NTP = ssDNA/pppN(pN)n-1 hybrid + (n-1) diphosphate.. RNA polymerase that catalyzes the synthesis of short RNA molecules used as primers for DNA polymerase during DNA replication. The chain is DNA primase from Staphylococcus aureus (strain MW2).